We begin with the raw amino-acid sequence, 59 residues long: MSDVNAHLLAQRIDTVLDILVAGDYHSAIHNLEILKAELLALAADDAEQQNQPKAPWEI.

The protein belongs to the UPF0509 family.

The sequence is that of UPF0509 protein KPN78578_12530 from Klebsiella pneumoniae subsp. pneumoniae (strain ATCC 700721 / MGH 78578).